The chain runs to 1211 residues: Diacylglycerol kinase 1 (1211 aa).

The interval 174-244 (HHSLGGHLSH…RNSSKKSSNS (71 aa)) is disordered. A compositionally biased stretch (polar residues) spans 197-230 (VTPSPLASGPSMFQASNPARRSVDSSPSHSATNH). Positions 231–244 (SQMSRNSSKKSSNS) are enriched in low complexity. EF-hand domains are found at residues 286–321 (RPED…MMAV) and 331–366 (ELRP…TIPL). Positions 299, 301, 303, 310, 344, 346, 348, 350, and 355 each coordinate Ca(2+). Phorbol-ester/DAG-type zinc fingers lie at residues 382-432 (IHVW…PASC) and 449-498 (LHHW…KKEC). In terms of domain architecture, DAGKc spans 548–682 (ELSCPLLVFV…LDRWSIEVTN (135 aa)). 3 disordered regions span residues 789–841 (TLRT…ETEK), 874–893 (AATA…QRNK), and 910–958 (DHED…QQQQ). Low complexity predominate over residues 795–805 (SSSSSNTSSGS). Positions 826-841 (DVREKSVPRRSGETEK) are enriched in basic and acidic residues. The span at 879–893 (PVGSNQSDNSSQRNK) shows a compositional bias: polar residues. Residues 931–958 (NSIPATPATPITPTTPNAASSVLQQQQQ) are compositionally biased toward low complexity.

Belongs to the eukaryotic diacylglycerol kinase family. In terms of tissue distribution, in 10-11 hours embryos, expression is abundant in a limited number of cells in the procephalic region and in the ventral nerve cord. Predominantly expressed in the adult nervous system and muscle: including compound eyes, brain cortex, fibrillar muscle, and tubular muscle.

It catalyses the reaction a 1,2-diacyl-sn-glycerol + ATP = a 1,2-diacyl-sn-glycero-3-phosphate + ADP + H(+). Its function is as follows. Upon cell stimulation converts the second messenger diacylglycerol into phosphatidate, initiating the resynthesis of phosphatidylinositols and attenuating protein kinase C activity. May have a role in the development of the embryonic nervous system and the function of the adult nervous system and muscle; regulating signal transduction in neurons. The sequence is that of Diacylglycerol kinase 1 (Dgk) from Drosophila melanogaster (Fruit fly).